The sequence spans 317 residues: Melanocyte-stimulating hormone receptor (317 aa).

Residues 1 to 37 (MVWQGPQRRLLGSLNGTSPATPHFELAANQTGPRCLE) lie on the Extracellular side of the membrane. N-linked (GlcNAc...) asparagine glycosylation is found at Asn-15 and Asn-29. A helical transmembrane segment spans residues 38–63 (VSIPNGLFLSLGLVSVVENVLVVAAI). Topologically, residues 64–72 (AKNRNLHSP) are cytoplasmic. The chain crosses the membrane as a helical span at residues 73 to 93 (MYYFIGCLAVSDLLVSVTNVL). At 94 to 118 (ETAVMLLVEAGALAAQAAVVQQLDD) the chain is on the extracellular side. Residues 119-140 (IIDVLICGSMVSSLCFLGAIAV) form a helical membrane-spanning segment. The Cytoplasmic portion of the chain corresponds to 141-163 (DRYLSIFYALRYHSIVTLPRAWR). The helical transmembrane segment at 164 to 183 (AISAIWVASVLSSTLFIAYY) threads the bilayer. Over 184–191 (NHTAVLLC) the chain is Extracellular. A helical transmembrane segment spans residues 192–211 (LVSFFVAMLVLMAVLYVHML). Topologically, residues 212–240 (ARARQHARGIARLRKRQHSVHQGFGLKGA) are cytoplasmic. A helical transmembrane segment spans residues 241-266 (ATLTILLGIFFLCWGPFFLHLSLMVL). The Extracellular segment spans residues 267 to 279 (CPQHPICGCVFQN). Residues 280-300 (FNLFLTLIICNSIIDPFIYAF) form a helical membrane-spanning segment. At 301-317 (RSQELRKTLQEVVLCSW) the chain is on the cytoplasmic side. A lipid anchor (S-palmitoyl cysteine) is attached at Cys-315.

Belongs to the G-protein coupled receptor 1 family. Interacts with MGRN1, but does not undergo MGRN1-mediated ubiquitination; this interaction competes with GNAS-binding and thus inhibits agonist-induced cAMP production. Interacts with OPN3; the interaction results in a decrease in MC1R-mediated cAMP signaling and ultimately a decrease in melanin production in melanocytes.

The protein localises to the cell membrane. Receptor for MSH (alpha, beta and gamma) and ACTH. The activity of this receptor is mediated by G proteins which activate adenylate cyclase. Mediates melanogenesis, the production of eumelanin (black/brown) and phaeomelanin (red/yellow), via regulation of cAMP signaling in melanocytes. The polypeptide is Melanocyte-stimulating hormone receptor (MC1R) (Canis lupus familiaris (Dog)).